The following is a 240-amino-acid chain: UDP-2,3-diacylglucosamine hydrolase (240 aa).

Mn(2+) is bound by residues Asp-8, His-10, Asp-41, Asn-79, and His-114. Residue 79–80 (NR) participates in substrate binding. Positions 122, 160, 164, 167, and 195 each coordinate substrate. His-195 and His-197 together coordinate Mn(2+).

It belongs to the LpxH family. Mn(2+) is required as a cofactor.

The protein resides in the cell inner membrane. It carries out the reaction UDP-2-N,3-O-bis[(3R)-3-hydroxytetradecanoyl]-alpha-D-glucosamine + H2O = 2-N,3-O-bis[(3R)-3-hydroxytetradecanoyl]-alpha-D-glucosaminyl 1-phosphate + UMP + 2 H(+). Its pathway is glycolipid biosynthesis; lipid IV(A) biosynthesis; lipid IV(A) from (3R)-3-hydroxytetradecanoyl-[acyl-carrier-protein] and UDP-N-acetyl-alpha-D-glucosamine: step 4/6. In terms of biological role, hydrolyzes the pyrophosphate bond of UDP-2,3-diacylglucosamine to yield 2,3-diacylglucosamine 1-phosphate (lipid X) and UMP by catalyzing the attack of water at the alpha-P atom. Involved in the biosynthesis of lipid A, a phosphorylated glycolipid that anchors the lipopolysaccharide to the outer membrane of the cell. The polypeptide is UDP-2,3-diacylglucosamine hydrolase (Photorhabdus laumondii subsp. laumondii (strain DSM 15139 / CIP 105565 / TT01) (Photorhabdus luminescens subsp. laumondii)).